Reading from the N-terminus, the 101-residue chain is Large ribosomal subunit protein uL24 (101 aa).

It belongs to the universal ribosomal protein uL24 family. As to quaternary structure, part of the 50S ribosomal subunit.

Functionally, one of two assembly initiator proteins, it binds directly to the 5'-end of the 23S rRNA, where it nucleates assembly of the 50S subunit. Its function is as follows. One of the proteins that surrounds the polypeptide exit tunnel on the outside of the subunit. This chain is Large ribosomal subunit protein uL24, found in Streptococcus mutans serotype c (strain ATCC 700610 / UA159).